A 278-amino-acid polypeptide reads, in one-letter code: HAUS augmin-like complex subunit 1 (278 aa).

Coiled-coil stretches lie at residues 49–79 (RDVYLVIEDLKQKASEYESEAKYLQDLLMES), 124–177 (SDLF…KVDN), and 249–277 (SLAQVKIEEAKRELDSIEAELTRRVDMME).

This sequence belongs to the HAUS1 family. In terms of assembly, component of the HAUS augmin-like complex. The complex interacts with the gamma-tubulin ring complex and this interaction is required for spindle assembly. Associates with microtubules. The interaction with microtubules is strong during mitosis, while it is weak or absent during interphase. It is unclear whether this interaction is direct or indirect. Interacts with EML3 (phosphorylated at 'Thr-881'). Widely expressed. Expressed in pancreas, kidney, skeletal muscle, liver and heart. Weakly expressed in lung, brain and placenta.

The protein localises to the cytoplasm. Its subcellular location is the cytoskeleton. The protein resides in the microtubule organizing center. It localises to the centrosome. It is found in the spindle. The protein localises to the spindle pole. In terms of biological role, contributes to mitotic spindle assembly, maintenance of centrosome integrity and completion of cytokinesis as part of the HAUS augmin-like complex. This Homo sapiens (Human) protein is HAUS augmin-like complex subunit 1 (HAUS1).